The chain runs to 520 residues: Succinyl-CoA:3-ketoacid coenzyme A transferase 2B, mitochondrial (520 aa).

The transit peptide at methionine 1–serine 39 directs the protein to the mitochondrion. The segment at glutamate 280–serine 299 is disordered. Glutamate 342 serves as the catalytic 5-glutamyl coenzyme A thioester intermediate.

Belongs to the 3-oxoacid CoA-transferase family. As to quaternary structure, homodimer. As to expression, testis specific. Expressed in late spermatids. Accumulates during spermiogenesis. Also detected in the midpiece of spermatozoa.

The protein resides in the mitochondrion. The catalysed reaction is a 3-oxo acid + succinyl-CoA = a 3-oxoacyl-CoA + succinate. Its pathway is ketone metabolism; succinyl-CoA degradation; acetoacetyl-CoA from succinyl-CoA: step 1/1. Its function is as follows. Key enzyme for ketone body catabolism. Transfers the CoA moiety from succinate to acetoacetate. Formation of the enzyme-CoA intermediate proceeds via an unstable anhydride species formed between the carboxylate groups of the enzyme and substrate. Probably play and important roles in the energy metabolism of spermatozoa. The sequence is that of Succinyl-CoA:3-ketoacid coenzyme A transferase 2B, mitochondrial (Oxct2b) from Mus musculus (Mouse).